The chain runs to 498 residues: Glycerol kinase (498 aa).

Residue Thr-12 coordinates ADP. ATP-binding residues include Thr-12, Thr-13, and Ser-14. Thr-12 lines the sn-glycerol 3-phosphate pocket. Arg-16 contributes to the ADP binding site. Sn-glycerol 3-phosphate contacts are provided by Arg-82, Glu-83, Tyr-134, and Asp-244. Positions 82, 83, 134, 244, and 245 each coordinate glycerol. Positions 266 and 310 each coordinate ADP. Residues Thr-266, Gly-310, Gln-314, and Gly-411 each coordinate ATP. Positions 411 and 415 each coordinate ADP.

This sequence belongs to the FGGY kinase family.

It catalyses the reaction glycerol + ATP = sn-glycerol 3-phosphate + ADP + H(+). The protein operates within polyol metabolism; glycerol degradation via glycerol kinase pathway; sn-glycerol 3-phosphate from glycerol: step 1/1. Its activity is regulated as follows. Inhibited by fructose 1,6-bisphosphate (FBP). In terms of biological role, key enzyme in the regulation of glycerol uptake and metabolism. Catalyzes the phosphorylation of glycerol to yield sn-glycerol 3-phosphate. In Roseiflexus sp. (strain RS-1), this protein is Glycerol kinase.